Consider the following 120-residue polypeptide: Large ribosomal subunit protein uL18 (120 aa).

The tract at residues 1-24 is disordered; that stretch reads MITKAAKNATRKKRHARVRAKLTG. Residues 9 to 20 are compositionally biased toward basic residues; sequence ATRKKRHARVRA.

Belongs to the universal ribosomal protein uL18 family. In terms of assembly, part of the 50S ribosomal subunit; part of the 5S rRNA/L5/L18/L25 subcomplex. Contacts the 5S and 23S rRNAs.

Its function is as follows. This is one of the proteins that bind and probably mediate the attachment of the 5S RNA into the large ribosomal subunit, where it forms part of the central protuberance. The polypeptide is Large ribosomal subunit protein uL18 (Bacillus mycoides (strain KBAB4) (Bacillus weihenstephanensis)).